The following is a 341-amino-acid chain: Biotin synthase (341 aa).

The Radical SAM core domain maps to 40 to 267 (AEIQVSTLLS…RSMVRLSAGR (228 aa)). [4Fe-4S] cluster is bound by residues Cys55, Cys59, and Cys62. Residues Cys99, Cys130, Cys190, and Arg262 each coordinate [2Fe-2S] cluster.

It belongs to the radical SAM superfamily. Biotin synthase family. Homodimer. [4Fe-4S] cluster is required as a cofactor. [2Fe-2S] cluster serves as cofactor.

The enzyme catalyses (4R,5S)-dethiobiotin + (sulfur carrier)-SH + 2 reduced [2Fe-2S]-[ferredoxin] + 2 S-adenosyl-L-methionine = (sulfur carrier)-H + biotin + 2 5'-deoxyadenosine + 2 L-methionine + 2 oxidized [2Fe-2S]-[ferredoxin]. The protein operates within cofactor biosynthesis; biotin biosynthesis; biotin from 7,8-diaminononanoate: step 2/2. Catalyzes the conversion of dethiobiotin (DTB) to biotin by the insertion of a sulfur atom into dethiobiotin via a radical-based mechanism. This Xylella fastidiosa (strain M12) protein is Biotin synthase.